A 277-amino-acid chain; its full sequence is 4-hydroxy-3-methylbut-2-enyl diphosphate reductase (277 aa).

Cysteine 12 serves as a coordination point for [4Fe-4S] cluster. (2E)-4-hydroxy-3-methylbut-2-enyl diphosphate contacts are provided by histidine 36 and histidine 70. Dimethylallyl diphosphate is bound by residues histidine 36 and histidine 70. Positions 36 and 70 each coordinate isopentenyl diphosphate. Cysteine 92 contacts [4Fe-4S] cluster. Residue histidine 120 coordinates (2E)-4-hydroxy-3-methylbut-2-enyl diphosphate. Histidine 120 provides a ligand contact to dimethylallyl diphosphate. Histidine 120 is an isopentenyl diphosphate binding site. Residue glutamate 122 is the Proton donor of the active site. Position 158 (threonine 158) interacts with (2E)-4-hydroxy-3-methylbut-2-enyl diphosphate. Cysteine 186 is a [4Fe-4S] cluster binding site. Positions 214, 216, and 258 each coordinate (2E)-4-hydroxy-3-methylbut-2-enyl diphosphate. Dimethylallyl diphosphate contacts are provided by serine 214, asparagine 216, and serine 258. The isopentenyl diphosphate site is built by serine 214, asparagine 216, and serine 258.

It belongs to the IspH family. [4Fe-4S] cluster is required as a cofactor.

The catalysed reaction is isopentenyl diphosphate + 2 oxidized [2Fe-2S]-[ferredoxin] + H2O = (2E)-4-hydroxy-3-methylbut-2-enyl diphosphate + 2 reduced [2Fe-2S]-[ferredoxin] + 2 H(+). The enzyme catalyses dimethylallyl diphosphate + 2 oxidized [2Fe-2S]-[ferredoxin] + H2O = (2E)-4-hydroxy-3-methylbut-2-enyl diphosphate + 2 reduced [2Fe-2S]-[ferredoxin] + 2 H(+). It functions in the pathway isoprenoid biosynthesis; dimethylallyl diphosphate biosynthesis; dimethylallyl diphosphate from (2E)-4-hydroxy-3-methylbutenyl diphosphate: step 1/1. The protein operates within isoprenoid biosynthesis; isopentenyl diphosphate biosynthesis via DXP pathway; isopentenyl diphosphate from 1-deoxy-D-xylulose 5-phosphate: step 6/6. Its function is as follows. Catalyzes the conversion of 1-hydroxy-2-methyl-2-(E)-butenyl 4-diphosphate (HMBPP) into a mixture of isopentenyl diphosphate (IPP) and dimethylallyl diphosphate (DMAPP). Acts in the terminal step of the DOXP/MEP pathway for isoprenoid precursor biosynthesis. The protein is 4-hydroxy-3-methylbut-2-enyl diphosphate reductase of Campylobacter jejuni subsp. jejuni serotype O:23/36 (strain 81-176).